The chain runs to 312 residues: MNRLAVELPGLSLKNPIMPASGCFGFGREYAKFYDLSVLGAMMIKATTLEARFGNPTPRVAETPSGMLNAIGLQNPGVDYVLAEELPWLAQYDVPIIANVAGSTVEEYVEVAKRISKAPNVHALELNISCPNVKKGGIAFGTVPEVAAELTRAVKEVSDVPVYVKLSPNVTNIVAMAKAIEQAGADGLTMINTLVGMRIDVKTGKPILANGTGGLSGPAIKPIAIRMIYEVSQAVSLPIIGMGGIQSAEDVIEFFYAGASAVAIGTANFIDPYVCPNIIAELPALLDELGFDHISECTGRSWNNGQTVYCGA.

Residues Ser-21 and 45–46 (KA) contribute to the FMN site. Residues Lys-45 and 69–73 (NAIGL) each bind substrate. FMN contacts are provided by Asn-99 and Asn-127. Residue Asn-127 coordinates substrate. Cys-130 acts as the Nucleophile in catalysis. FMN-binding residues include Lys-165 and Ile-191. Residue 192-193 (NT) coordinates substrate. FMN contacts are provided by residues Gly-217, 243–244 (GG), and 265–266 (GT).

Belongs to the dihydroorotate dehydrogenase family. Type 1 subfamily. As to quaternary structure, heterotetramer of 2 PyrK and 2 PyrD type B subunits. FMN serves as cofactor.

The protein resides in the cytoplasm. It catalyses the reaction (S)-dihydroorotate + NAD(+) = orotate + NADH + H(+). It functions in the pathway pyrimidine metabolism; UMP biosynthesis via de novo pathway; orotate from (S)-dihydroorotate (NAD(+) route): step 1/1. In terms of biological role, catalyzes the conversion of dihydroorotate to orotate with NAD(+) as electron acceptor. This Anoxybacillus flavithermus (strain DSM 21510 / WK1) protein is Dihydroorotate dehydrogenase B (NAD(+)), catalytic subunit (pyrD).